The chain runs to 422 residues: UPF0761 membrane protein LHK_02978 (422 aa).

The next 6 membrane-spanning stretches (helical) occupy residues 44 to 64 (LLSL…FPVF), 102 to 122 (LTAV…LTID), 141 to 161 (MLVY…GISG), 178 to 198 (LAGI…LTVL), 212 to 232 (ALIG…GFGL), and 246 to 266 (AFAT…TVLI).

It belongs to the UPF0761 family.

Its subcellular location is the cell inner membrane. This Laribacter hongkongensis (strain HLHK9) protein is UPF0761 membrane protein LHK_02978.